Here is a 780-residue protein sequence, read N- to C-terminus: APC membrane recruitment protein 3 (780 aa).

A compositionally biased stretch (basic and acidic residues) spans Lys-20–Lys-32. Disordered stretches follow at residues Lys-20–Gly-59, Glu-341–Asp-407, Lys-547–Gly-569, Gly-582–Ser-617, Lys-635–Leu-659, Lys-706–Asp-729, and Leu-749–Ser-780. Residues Ser-354 to Asp-376 are compositionally biased toward polar residues. Positions Gln-602–Ser-617 are enriched in polar residues. The segment covering Ala-753–Gln-763 has biased composition (polar residues).

Belongs to the Amer family.

Its subcellular location is the cell membrane. Regulator of the canonical Wnt signaling pathway. Acts by specifically binding phosphatidylinositol 4,5-bisphosphate (PtdIns(4,5)P2), translocating to the cell membrane. This chain is APC membrane recruitment protein 3 (Amer3), found in Mus musculus (Mouse).